A 102-amino-acid chain; its full sequence is Cytochrome b (102 aa).

The next 3 helical transmembrane spans lie at 1–21, 45–66, and 81–101; these read FGSL…FLAM, WLIR…YLHI, and WNIG…GYVL. Heme b contacts are provided by H51 and H65.

The protein belongs to the cytochrome b family. The cytochrome bc1 complex contains 3 respiratory subunits (MT-CYB, CYC1 and UQCRFS1), 2 core proteins (UQCRC1 and UQCRC2) and probably 6 low-molecular weight proteins. Heme b is required as a cofactor.

Its subcellular location is the mitochondrion inner membrane. Component of the ubiquinol-cytochrome c reductase complex (complex III or cytochrome b-c1 complex) that is part of the mitochondrial respiratory chain. The b-c1 complex mediates electron transfer from ubiquinol to cytochrome c. Contributes to the generation of a proton gradient across the mitochondrial membrane that is then used for ATP synthesis. The polypeptide is Cytochrome b (mt-cyb) (Megalops atlanticus (Tarpon)).